Here is a 359-residue protein sequence, read N- to C-terminus: Stearoyl-CoA desaturase (359 aa).

The Cytoplasmic segment spans residues 1-72; that stretch reads MPAHLLQEEI…EGPKPKLEYV (72 aa). The helical transmembrane segment at 73 to 93 threads the bilayer; sequence WRNIILMGLLHLGALYGITLI. Asn75 lines the substrate pocket. At 94 to 97 the chain is on the lumenal side; it reads PTCK. Residues 98-118 traverse the membrane as a helical segment; that stretch reads IYTFLWVLFYYMMSALGITAG. The Cytoplasmic segment spans residues 119-217; sequence VHRLWSHRTY…EKLVMFQRRY (99 aa). Positions 120 and 125 each coordinate Fe cation. Positions 120–125 match the Histidine box-1 motif; sequence HRLWSH. Positions 148, 155, and 156 each coordinate substrate. The Fe cation site is built by His157, His160, and His161. A Histidine box-2 motif is present at residues 157–161; sequence HRAHH. Residues Arg188 and Lys189 each contribute to the substrate site. Phosphoserine is present on Ser203. Residues 218 to 237 form a helical membrane-spanning segment; it reads YKPGVLLLCFILPTLVPWYL. Residues 238-241 lie on the Lumenal side of the membrane; that stretch reads WGET. A helical membrane pass occupies residues 242–263; it reads FQNSLFFATLLRYAVVLNATWL. Trp262 contributes to the substrate binding site. The Cytoplasmic portion of the chain corresponds to 264-359; the sequence is VNSAAHMYGY…RTGEESCKSG (96 aa). Fe cation contacts are provided by His269, His298, His301, and His302. The Histidine box-3 signature appears at 298-302; sequence HNYHH.

The protein belongs to the fatty acid desaturase type 1 family. It depends on Fe(2+) as a cofactor.

The protein localises to the endoplasmic reticulum membrane. The catalysed reaction is octadecanoyl-CoA + 2 Fe(II)-[cytochrome b5] + O2 + 2 H(+) = (9Z)-octadecenoyl-CoA + 2 Fe(III)-[cytochrome b5] + 2 H2O. It carries out the reaction hexadecanoyl-CoA + 2 Fe(II)-[cytochrome b5] + O2 + 2 H(+) = (9Z)-hexadecenoyl-CoA + 2 Fe(III)-[cytochrome b5] + 2 H2O. In terms of biological role, stearoyl-CoA desaturase that utilizes O(2) and electrons from reduced cytochrome b5 to introduce the first double bond into saturated fatty acyl-CoA substrates. Catalyzes the insertion of a cis double bond at the delta-9 position into fatty acyl-CoA substrates including palmitoyl-CoA and stearoyl-CoA. Gives rise to a mixture of 16:1 and 18:1 unsaturated fatty acids. Plays an important role in lipid biosynthesis. Plays an important role in regulating the expression of genes that are involved in lipogenesis and in regulating mitochondrial fatty acid oxidation. Plays an important role in body energy homeostasis. Contributes to the biosynthesis of membrane phospholipids, cholesterol esters and triglycerides. This Capra hircus (Goat) protein is Stearoyl-CoA desaturase (SCD).